The primary structure comprises 423 residues: Serine--tRNA ligase (423 aa).

Position 231 to 233 (threonine 231 to glutamate 233) interacts with L-serine. Arginine 262–glutamate 264 is an ATP binding site. Residue glutamate 285 coordinates L-serine. ATP is bound at residue glutamate 349–serine 352. Serine 385 contacts L-serine.

Belongs to the class-II aminoacyl-tRNA synthetase family. Type-1 seryl-tRNA synthetase subfamily. In terms of assembly, homodimer. The tRNA molecule binds across the dimer.

The protein resides in the cytoplasm. The catalysed reaction is tRNA(Ser) + L-serine + ATP = L-seryl-tRNA(Ser) + AMP + diphosphate + H(+). It catalyses the reaction tRNA(Sec) + L-serine + ATP = L-seryl-tRNA(Sec) + AMP + diphosphate + H(+). It participates in aminoacyl-tRNA biosynthesis; selenocysteinyl-tRNA(Sec) biosynthesis; L-seryl-tRNA(Sec) from L-serine and tRNA(Sec): step 1/1. Functionally, catalyzes the attachment of serine to tRNA(Ser). Is also able to aminoacylate tRNA(Sec) with serine, to form the misacylated tRNA L-seryl-tRNA(Sec), which will be further converted into selenocysteinyl-tRNA(Sec). The sequence is that of Serine--tRNA ligase from Coxiella burnetii (strain RSA 331 / Henzerling II).